The sequence spans 284 residues: RNA polymerase sigma factor RpoH (284 aa).

Residues 54-123 are sigma-70 factor domain-2; it reads MVLAHLRFVV…IHEFILRNWR (70 aa). The short motif at 78–81 is the Interaction with polymerase core subunit RpoC element; it reads DLIQ. The segment at 229–280 is sigma-70 factor domain-4; it reads ALEGLDERSRDILQQRWLSEEKATLHDLAEKYNVSAERIRQLEKNAMSKLKG. The H-T-H motif DNA-binding region spans 253 to 272; it reads LHDLAEKYNVSAERIRQLEK.

It belongs to the sigma-70 factor family. RpoH subfamily. Interacts with the RNA polymerase core enzyme.

The protein resides in the cytoplasm. Its function is as follows. Sigma factors are initiation factors that promote the attachment of RNA polymerase to specific initiation sites and are then released. This sigma factor is involved in regulation of expression of heat shock genes. In Pseudomonas aeruginosa (strain ATCC 15692 / DSM 22644 / CIP 104116 / JCM 14847 / LMG 12228 / 1C / PRS 101 / PAO1), this protein is RNA polymerase sigma factor RpoH.